The primary structure comprises 275 residues: Nitrate import permease protein NrtB (275 aa).

7 consecutive transmembrane segments (helical) span residues 25–45 (VIRP…LCSG), 89–109 (VAVG…LIGS), 120–140 (IFQV…LAAL), 147–167 (AIFV…TVGA), 189–209 (FFNI…RIGI), 213–233 (WLAI…FFIW), and 238–258 (SSLI…GLLL). Positions 82–262 (IFASLTRVAV…IVGLLLDRFI (181 aa)) constitute an ABC transmembrane type-1 domain.

Belongs to the binding-protein-dependent transport system permease family. CysTW subfamily. The complex is composed of two ATP-binding proteins (NrtC and NrtD), two transmembrane proteins (NrtB) and a solute-binding protein (NrtA).

The protein localises to the cell inner membrane. In terms of biological role, part of the ABC transporter complex NrtABCD involved in nitrate uptake. The complex is probably also involved in nitrite transport. Probably responsible for the translocation of the substrate across the membrane. The chain is Nitrate import permease protein NrtB (nrtB) from Synechocystis sp. (strain ATCC 27184 / PCC 6803 / Kazusa).